Reading from the N-terminus, the 1106-residue chain is Protein transport protein Sec31A (1106 aa).

7 WD repeats span residues 4 to 47, 68 to 111, 120 to 160, 166 to 206, 209 to 254, 258 to 298, and 301 to 342; these read KEVD…EIFE, RYHK…AGDK, KHTG…TPMT, QPPE…PIIK, DHSN…SPLR, NHAR…VLYE, and TNTQ…DGLR. The tract at residues 161-471 is interaction with SEC13; that stretch reads PGAKTQPPED…IDASQTEFEK (311 aa). Residues 397–430 form a WD 8; interaction with SEC13 repeat; that stretch reads SFSFGGKLVTFENVRMPSHQGAEQQQQQHHVFIS. 2 positions are modified to phosphoserine: Ser-527 and Ser-532. A Glycyl lysine isopeptide (Lys-Gly) (interchain with G-Cter in ubiquitin) cross-link involves residue Lys-647. Phosphoserine is present on Ser-799. The tract at residues 800 to 999 is interaction with PDCD6; it reads PKIPYEEQQL…TKKITKKPIP (200 aa). Positions 842–848 match the ALG-2-binding site motif-2 (ABS-2) motif; sequence GFIMHGN. The disordered stretch occupies residues 859-980; that stretch reads TSPGHMHTQV…EGAPGAPIGN (122 aa). Over residues 917–939 the composition is skewed to polar residues; that stretch reads PQSQMLQQQPSAPVPLSSQSSFP. Position 1047 is a phosphothreonine (Thr-1047). Ser-1049 is subject to Phosphoserine. Lys-1103 is covalently cross-linked (Glycyl lysine isopeptide (Lys-Gly) (interchain with G-Cter in ubiquitin)).

It belongs to the WD repeat SEC31 family. As to quaternary structure, COPII is composed of at least 5 proteins: the SEC23/24 complex, the SEC13/31 complex and SAR1. SEC13 and SEC31 make a 2:2 tetramer that forms the edge element of the COPII outer coat. The tetramer self-assembles in multiple copies to form the complete polyhedral cage. Interacts (via WD 8) with SEC13. Interacts with PDCD6; interaction takes place in response to cytosolic calcium increase and leads to bridge together the BCR(KLHL12) complex and SEC31A, leading to monoubiquitination. Interacts with KLHL12. Monoubiquitinated by the BCR(KLHL12) E3 ubiquitin ligase complex, leading to regulate the size of COPII coats.

Its subcellular location is the cytoplasm. It is found in the cytoplasmic vesicle. The protein resides in the COPII-coated vesicle membrane. The protein localises to the endoplasmic reticulum membrane. Its function is as follows. Component of the coat protein complex II (COPII) which promotes the formation of transport vesicles from the endoplasmic reticulum (ER). The coat has two main functions, the physical deformation of the endoplasmic reticulum membrane into vesicles and the selection of cargo molecules. The polypeptide is Protein transport protein Sec31A (SEC31A) (Pongo abelii (Sumatran orangutan)).